Consider the following 72-residue polypeptide: Translation initiation factor IF-1 (72 aa).

The 71-residue stretch at 2-72 (AKEDCIEMQG…SKGRIIFRSR (71 aa)) folds into the S1-like domain.

It belongs to the IF-1 family. In terms of assembly, component of the 30S ribosomal translation pre-initiation complex which assembles on the 30S ribosome in the order IF-2 and IF-3, IF-1 and N-formylmethionyl-tRNA(fMet); mRNA recruitment can occur at any time during PIC assembly.

Its subcellular location is the cytoplasm. In terms of biological role, one of the essential components for the initiation of protein synthesis. Stabilizes the binding of IF-2 and IF-3 on the 30S subunit to which N-formylmethionyl-tRNA(fMet) subsequently binds. Helps modulate mRNA selection, yielding the 30S pre-initiation complex (PIC). Upon addition of the 50S ribosomal subunit IF-1, IF-2 and IF-3 are released leaving the mature 70S translation initiation complex. The protein is Translation initiation factor IF-1 of Haemophilus influenzae (strain ATCC 51907 / DSM 11121 / KW20 / Rd).